The sequence spans 244 residues: Small ribosomal subunit protein eS4 (244 aa).

The 64-residue stretch at 43-106 (LPLLLVVRDV…DENYLVLFDE (64 aa)) folds into the S4 RNA-binding domain.

It belongs to the eukaryotic ribosomal protein eS4 family.

This chain is Small ribosomal subunit protein eS4, found in Methanococcus maripaludis (strain C7 / ATCC BAA-1331).